A 104-amino-acid chain; its full sequence is Probable quinol monooxygenase YgiN (104 aa).

One can recognise an ABM domain in the interval 2 to 100 (LTVIAEIRTR…DVLEMNIRIL (99 aa)).

As to quaternary structure, homodimer.

It catalyses the reaction menadiol + 2 O2 = menadione + 2 superoxide + 2 H(+). Can oxidize menadiol to menadione. This is Probable quinol monooxygenase YgiN (ygiN) from Escherichia coli O157:H7.